Here is a 71-residue protein sequence, read N- to C-terminus: UPF0346 protein SPT_1257 (71 aa).

This sequence belongs to the UPF0346 family.

This Streptococcus pneumoniae (strain Taiwan19F-14) protein is UPF0346 protein SPT_1257.